An 805-amino-acid chain; its full sequence is Replication restart protein PriA (805 aa).

The 3'BD stretch occupies residues 1–110; it reads MNFAEVIVDV…QAMLPAALKA (110 aa). Residues 111–166 are linker; that stretch reads KYEKELKIAHGADLPPQVERLFSETKTLLYSDIPDHETLKLIQRHVQKGDIDVTYK. Residues 167-253 are WH; that stretch reads VAQKTNKKMV…KESYEEVYRD (87 aa). Positions 282–448 constitute a Helicase ATP-binding domain; that stretch reads TLDSDEHKVF…QKGVYELLSL (167 aa). 295-302 lines the ATP pocket; it reads GVTGSGKT. A DEAH box motif is present at residues 391 to 394; the sequence is DEEH. Zn(2+) contacts are provided by C510, C513, C519, C522, C537, C540, C550, and C553. The 155-residue stretch at 545 to 699 folds into the Helicase C-terminal domain; it reads PVPHTCPECA…TFYQHEMAHR (155 aa).

Belongs to the helicase family. PriA subfamily. As to quaternary structure, monomer. Component of the replication restart primosome which assembles in this order; PriA, DnaD then DnaB. The preferred DNA substrate mimics an arrested DNA replication fork with unreplicated lagging strand. Interacts with DnaD but not DnaB. Interacts with SSB (sbbA) via the latter's 35 residue C-terminal tail which tethers PriA to ssDNA. Colocalizes with DNA pol III subunit gamma/tau (dnaX). May interact with RarA. Zn(2+) serves as cofactor.

Its subcellular location is the cytoplasm. The protein resides in the nucleoid. The enzyme catalyses Couples ATP hydrolysis with the unwinding of duplex DNA by translocating in the 3'-5' direction.. It catalyses the reaction ATP + H2O = ADP + phosphate + H(+). Initiates the restart of stalled replication forks, which reloads the replicative helicase on sites other than the origin of replication. Recognizes and binds to abandoned replication forks and remodels them to uncover a helicase loading site. Promotes assembly of the primosome at these replication forks. Serves as the initiating protein for assembly of the replication restart primosome; binding of PriA to an arrested DNA replication fork with unreplicated lagging strand triggers assembly. Sequentially DnaD (possibly as a dimer) and DnaB homotetramers bind. Assembly probably continues by loading of the DnaC replicative helicase aided by helicase loader DnaI. A single-strand (ss)DNA-dependent ATPase with helicase activity. Recognizes and binds the arrested nascent DNA chain at stalled replication forks. Binds forked DNA substrates and makes a larger complex with RarA; RarA has no effect on the helicase function. Binds ssDNA, D-loops and replication fork-like substrates but not double-stranded (ds)DNA; the preferred DNA substrate mimics an arrested DNA replication fork with an unreplicated lagging strand. Recognizes nicked dsDNA. A supershift on ssDNA occurs in the presence of single-stranded binding protein (SSB). Cannot substitute for E.coli PriA. Functionally, required for replication of plasmids that have a rolling circle mechanism, which produces circular single-stranded (ss)DNA intermediates corresponding to the lagging strand template, which are then converted into double-stranded (ds)DNA; priA is required to activate the conversion of ssDNA into dsDNA. The sequence is that of Replication restart protein PriA from Bacillus subtilis (strain 168).